The following is a 205-amino-acid chain: Probable thymidylate kinase (205 aa).

10–17 (GIDGSGKT) contributes to the ATP binding site.

It belongs to the thymidylate kinase family.

It catalyses the reaction dTMP + ATP = dTDP + ADP. This Pyrococcus abyssi (strain GE5 / Orsay) protein is Probable thymidylate kinase (tmk).